The primary structure comprises 89 residues: Small ribosomal subunit protein uS14A (89 aa).

The tract at residues A29–M62 is disordered. Residues R49 to P58 show a composition bias toward basic and acidic residues.

This sequence belongs to the universal ribosomal protein uS14 family. Part of the 30S ribosomal subunit. Contacts proteins S3 and S10.

Its function is as follows. Binds 16S rRNA, required for the assembly of 30S particles and may also be responsible for determining the conformation of the 16S rRNA at the A site. This is Small ribosomal subunit protein uS14A from Enterococcus faecalis (strain ATCC 700802 / V583).